We begin with the raw amino-acid sequence, 418 residues long: uncharacterized protein (418 aa).

It belongs to the poxviruses C4/C10 family.

This is an uncharacterized protein from Fowlpox virus (strain NVSL) (FPV).